Reading from the N-terminus, the 734-residue chain is Ribosomal RNA large subunit methyltransferase K/L (734 aa).

One can recognise a THUMP domain in the interval 49–167; it reads HAYRICMWSR…KTEHTYCLDL (119 aa).

Belongs to the methyltransferase superfamily. RlmKL family.

It localises to the cytoplasm. It catalyses the reaction guanosine(2445) in 23S rRNA + S-adenosyl-L-methionine = N(2)-methylguanosine(2445) in 23S rRNA + S-adenosyl-L-homocysteine + H(+). The catalysed reaction is guanosine(2069) in 23S rRNA + S-adenosyl-L-methionine = N(2)-methylguanosine(2069) in 23S rRNA + S-adenosyl-L-homocysteine + H(+). Functionally, specifically methylates the guanine in position 2445 (m2G2445) and the guanine in position 2069 (m7G2069) of 23S rRNA. This Acinetobacter baumannii (strain ACICU) protein is Ribosomal RNA large subunit methyltransferase K/L.